Reading from the N-terminus, the 896-residue chain is Translation initiation factor IF-2 (896 aa).

The segment covering 93–219 (VKRDPQEAER…RMAEENEKNW (127 aa)) has biased composition (basic and acidic residues). The tract at residues 93 to 307 (VKRDPQEAER…GSALQQGFQK (215 aa)) is disordered. Over residues 256–271 (GRSRSSKAARPAKKGN) the composition is skewed to basic residues. Over residues 272-285 (KHAESKADREEARA) the composition is skewed to basic and acidic residues. Positions 395-564 (PRAPVVTIMG…LLQAEVLELK (170 aa)) constitute a tr-type G domain. The tract at residues 404-411 (GHVDHGKT) is G1. 404–411 (GHVDHGKT) is a GTP binding site. The interval 429 to 433 (GITQH) is G2. The G3 stretch occupies residues 450 to 453 (DTPG). GTP is bound by residues 450 to 454 (DTPGH) and 504 to 507 (NKID). The segment at 504–507 (NKID) is G4. The G5 stretch occupies residues 540–542 (SAK).

The protein belongs to the TRAFAC class translation factor GTPase superfamily. Classic translation factor GTPase family. IF-2 subfamily.

The protein resides in the cytoplasm. Functionally, one of the essential components for the initiation of protein synthesis. Protects formylmethionyl-tRNA from spontaneous hydrolysis and promotes its binding to the 30S ribosomal subunits. Also involved in the hydrolysis of GTP during the formation of the 70S ribosomal complex. This chain is Translation initiation factor IF-2, found in Klebsiella pneumoniae subsp. pneumoniae (strain ATCC 700721 / MGH 78578).